A 317-amino-acid chain; its full sequence is Acetyl-coenzyme A carboxylase carboxyl transferase subunit alpha (317 aa).

In terms of domain architecture, CoA carboxyltransferase C-terminal spans 39-293 (RLESKAAAAL…GDALAEALTG (255 aa)).

This sequence belongs to the AccA family. In terms of assembly, acetyl-CoA carboxylase is a heterohexamer composed of biotin carboxyl carrier protein (AccB), biotin carboxylase (AccC) and two subunits each of ACCase subunit alpha (AccA) and ACCase subunit beta (AccD).

It is found in the cytoplasm. It carries out the reaction N(6)-carboxybiotinyl-L-lysyl-[protein] + acetyl-CoA = N(6)-biotinyl-L-lysyl-[protein] + malonyl-CoA. The protein operates within lipid metabolism; malonyl-CoA biosynthesis; malonyl-CoA from acetyl-CoA: step 1/1. In terms of biological role, component of the acetyl coenzyme A carboxylase (ACC) complex. First, biotin carboxylase catalyzes the carboxylation of biotin on its carrier protein (BCCP) and then the CO(2) group is transferred by the carboxyltransferase to acetyl-CoA to form malonyl-CoA. This Methylobacterium nodulans (strain LMG 21967 / CNCM I-2342 / ORS 2060) protein is Acetyl-coenzyme A carboxylase carboxyl transferase subunit alpha.